The following is a 363-amino-acid chain: Cobalt-precorrin-5B C(1)-methyltransferase (363 aa).

The protein belongs to the CbiD family.

It carries out the reaction Co-precorrin-5B + S-adenosyl-L-methionine = Co-precorrin-6A + S-adenosyl-L-homocysteine. It participates in cofactor biosynthesis; adenosylcobalamin biosynthesis; cob(II)yrinate a,c-diamide from sirohydrochlorin (anaerobic route): step 6/10. Catalyzes the methylation of C-1 in cobalt-precorrin-5B to form cobalt-precorrin-6A. This chain is Cobalt-precorrin-5B C(1)-methyltransferase, found in Burkholderia pseudomallei (strain K96243).